The primary structure comprises 198 residues: Ribonuclease HII (198 aa).

The RNase H type-2 domain maps to 10 to 198 (QLVAGVDEVG…PVKRALGLAS (189 aa)). Positions 16, 17, and 108 each coordinate a divalent metal cation.

Belongs to the RNase HII family. Mn(2+) serves as cofactor. Mg(2+) is required as a cofactor.

The protein resides in the cytoplasm. It catalyses the reaction Endonucleolytic cleavage to 5'-phosphomonoester.. Endonuclease that specifically degrades the RNA of RNA-DNA hybrids. This Escherichia coli O45:K1 (strain S88 / ExPEC) protein is Ribonuclease HII.